Consider the following 379-residue polypeptide: Type II methyltransferase M.CvrRI (379 aa).

Belongs to the N(4)/N(6)-methyltransferase family.

The catalysed reaction is a 2'-deoxyadenosine in DNA + S-adenosyl-L-methionine = an N(6)-methyl-2'-deoxyadenosine in DNA + S-adenosyl-L-homocysteine + H(+). Its function is as follows. A gamma subtype methylase, recognizes the double-stranded sequence 5'-TGCA-3', methylates A-4 on both strands, and protects the DNA from cleavage by the CviRI endonuclease. This is Type II methyltransferase M.CvrRI (CVIRIM) from Chlorella (PBCV-XZ-6E).